The chain runs to 484 residues: Calcium-dependent protein kinase 26 (484 aa).

Positions 24 to 282 constitute a Protein kinase domain; it reads YSLGHKLGQG…AHQVLRHPWI (259 aa). Residues 30 to 38 and Lys53 contribute to the ATP site; that span reads LGQGQFGTT. Residue Asp148 is the Proton acceptor of the active site. Ser188 carries the phosphoserine modification. Residues 288–318 form an autoinhibitory domain region; that stretch reads APDRALDPAVLSRLKQFSAMNKLKQMALRVI. EF-hand domains lie at 325–360, 361–396, 397–432, and 436–466; these read EEIAGLKEMFKAMDTDNSGAITFDELKAGLRRYGST, LKDTEIRDLMEAADIDKSGTIDYGEFIAATIHLNKL, EREEHLLSAFRYFDKDGSGYITIDELQHACAEQGMS, and LEDVIKEVDQDNDGRIDYGEFVAMMQKGIVG. Residues Asp338, Asp340, Ser342, Glu349, Asp374, Asp376, Ser378, Thr380, Glu385, Asp410, Asp412, Ser414, Tyr416, Glu421, Asp444, Asp446, Asp448, Arg450, and Glu455 each contribute to the Ca(2+) site.

It belongs to the protein kinase superfamily. Ser/Thr protein kinase family. CDPK subfamily.

The catalysed reaction is L-seryl-[protein] + ATP = O-phospho-L-seryl-[protein] + ADP + H(+). The enzyme catalyses L-threonyl-[protein] + ATP = O-phospho-L-threonyl-[protein] + ADP + H(+). With respect to regulation, activated by calcium. Autophosphorylation may play an important role in the regulation of the kinase activity. In terms of biological role, may play a role in signal transduction pathways that involve calcium as a second messenger. The sequence is that of Calcium-dependent protein kinase 26 (CPK26) from Arabidopsis thaliana (Mouse-ear cress).